Reading from the N-terminus, the 106-residue chain is Nucleoid-associated protein Nham_0463 (106 aa).

It belongs to the YbaB/EbfC family. As to quaternary structure, homodimer.

It localises to the cytoplasm. Its subcellular location is the nucleoid. In terms of biological role, binds to DNA and alters its conformation. May be involved in regulation of gene expression, nucleoid organization and DNA protection. This Nitrobacter hamburgensis (strain DSM 10229 / NCIMB 13809 / X14) protein is Nucleoid-associated protein Nham_0463.